The chain runs to 153 residues: MEKLDKLSEAFKALLKQEKFSSQSEIVTALQELGFENINQSKVSRMLSKFGAVRTRNTKMEMVYQLPAELGVPTTSSPLKNLVVDIDHNDVLIVVKTSPGAAQLIARLLDSMGKSEGILGTIAGDDTIFITPTKVTPVEVLMQNVTELFESSF.

The protein belongs to the ArgR family.

It is found in the cytoplasm. Its pathway is amino-acid biosynthesis; L-arginine biosynthesis [regulation]. Regulates arginine biosynthesis genes. The polypeptide is Arginine repressor (Actinobacillus pleuropneumoniae serotype 5b (strain L20)).